The primary structure comprises 397 residues: MLSKFFPHIKEKPLSERVKSRDAFIYLDRVMWSFGWTEPENKRWILPYKLWLAFVNIVMLILLPISISIEYLHRFKTFSAGEFLSSLEIGVNMYGSSFKCAFTLIGFKKRQEAKVLLDQLDKRCLSDKERSTVHRYVAMGNFFDILYHIFYSTFVVMNFPYFLLERRHAWRMYFPYIDSDEQFYISSIAECFLMTEAIYMDLCTDVCPLISMLMARCHISLLKQRLRNLRSKPGRTEDEYLEELTECIRDHRLLLDYVDALRPVFSGTIFVQFLLIGTVLGLSMINLMFFSTFWTGVATCLFMFDVSMETFPFCYLCNMIIDDCQEMSNCLFQSDWTSADRRYKSTLVYFLHNLQQPITLTAGGVFPISMQTNLAMVKLAFSVVTVIKQFNLAERFQ.

At 1–49 (MLSKFFPHIKEKPLSERVKSRDAFIYLDRVMWSFGWTEPENKRWILPYK) the chain is on the cytoplasmic side. The chain crosses the membrane as a helical span at residues 50–70 (LWLAFVNIVMLILLPISISIE). At 71–86 (YLHRFKTFSAGEFLSS) the chain is on the extracellular side. A helical transmembrane segment spans residues 87–107 (LEIGVNMYGSSFKCAFTLIGF). Residues 108–136 (KKRQEAKVLLDQLDKRCLSDKERSTVHRY) are Cytoplasmic-facing. The helical transmembrane segment at 137 to 157 (VAMGNFFDILYHIFYSTFVVM) threads the bilayer. The Extracellular segment spans residues 158–182 (NFPYFLLERRHAWRMYFPYIDSDEQ). Residues 183–203 (FYISSIAECFLMTEAIYMDLC) form a helical membrane-spanning segment. At 204–263 (TDVCPLISMLMARCHISLLKQRLRNLRSKPGRTEDEYLEELTECIRDHRLLLDYVDALRP) the chain is on the cytoplasmic side. A helical membrane pass occupies residues 264–280 (VFSGTIFVQFLLIGTVL). Topologically, residues 281–286 (GLSMIN) are extracellular. Residues 287 to 304 (LMFFSTFWTGVATCLFMF) form a helical membrane-spanning segment. At 305-356 (DVSMETFPFCYLCNMIIDDCQEMSNCLFQSDWTSADRRYKSTLVYFLHNLQQ) the chain is on the cytoplasmic side. A helical transmembrane segment spans residues 357-377 (PITLTAGGVFPISMQTNLAMV). Topologically, residues 378 to 397 (KLAFSVVTVIKQFNLAERFQ) are extracellular.

The protein belongs to the insect chemoreceptor superfamily. Heteromeric odorant receptor channel (TC 1.A.69) family. Or2a subfamily. Interacts with Orco, via conserved C-terminal cytoplasmic loops. Complexes exist early in the endomembrane system in olfactory sensory neurons (OSNs), coupling these complexes to the conserved ciliary trafficking pathway. Interacts with snmp1. As to expression, expressed with Orco in 17-20 sensory neurons on the medial-proximal edge of the antenna. Expressed in the ab3A neuron which responds to ethyl butyrate.

Its subcellular location is the cell membrane. Its function is as follows. Odorant receptor which mediates acceptance or avoidance behavior, depending on its substrates. The odorant receptor repertoire encodes a large collection of odor stimuli that vary widely in identity, intensity, and duration. Involved in the behavioral responses ethyl butyrate and to esters in more general. Complexes with Orco to form odorant-sensing units, providing sensitive and prolonged odorant signaling and calcium permeability. They are necessary and sufficient to promote functional reconstitution of odor-evoked signaling in sensory neurons that normally respond only to carbon dioxide. This chain is Odorant receptor 22a (Or22a), found in Drosophila melanogaster (Fruit fly).